The chain runs to 90 residues: Elongation factor 1-beta (90 aa).

This sequence belongs to the EF-1-beta/EF-1-delta family.

Its function is as follows. Promotes the exchange of GDP for GTP in EF-1-alpha/GDP, thus allowing the regeneration of EF-1-alpha/GTP that could then be used to form the ternary complex EF-1-alpha/GTP/AAtRNA. In Aeropyrum pernix (strain ATCC 700893 / DSM 11879 / JCM 9820 / NBRC 100138 / K1), this protein is Elongation factor 1-beta (ef1b).